Here is a 525-residue protein sequence, read N- to C-terminus: Alcohol O-acetyltransferase 1 (525 aa).

Residues 24 to 41 (GHARRMGSVEDLYVALNR) are membrane association. Residues His191 and Asp195 each act as charge relay system in the active site. A membrane association region spans residues 508–525 (QESLEELCSIYKALLLGP).

The protein belongs to the ATF1 alcohol acetyltransferase family.

It is found in the lipid droplet. Its subcellular location is the endoplasmic reticulum membrane. The enzyme catalyses an aliphatic alcohol + acetyl-CoA = an acetyl ester + CoA. It catalyses the reaction a fatty acyl-CoA + H2O = a fatty acid + CoA + H(+). It carries out the reaction 3-methylbutanol + acetyl-CoA = 3-methylbutyl acetate + CoA. Found to be inhibited by cadmium, copper, zinc and mercurium divalent cations and sulfhydryl reagents. Inhibited by the addition of unsaturated fatty acids to the culture. Its function is as follows. Major alcohol O-acetyltransferase that uses acetyl-CoA to synthesize acetate esters from various alcohols, producing ethyl acetate, isoamyl acetate, isobutyl acetate, butyl acetate, hexyl acetate, heptyl acetate and octyl acetate. The alcohol acyltransferase activity is promiscuous with regard to alcohol but relatively specific for acetyl-CoA since ATF1 does not use any other acyl-CoAs (C3, C4, C5, C6, C8, C10, C12). Acts also as an efficient thioesterase in vitro with specificity towards medium-chain-length acyl-CoAs. In natural environments, the production of aromatic volatile metabolites promotes dispersal through insect vectors. In Saccharomyces cerevisiae (strain ATCC 204508 / S288c) (Baker's yeast), this protein is Alcohol O-acetyltransferase 1.